Consider the following 539-residue polypeptide: Sodium/hydrogen exchanger 9B2 (539 aa).

Over Met-1–Leu-94 the chain is Cytoplasmic. A helical transmembrane segment spans residues Ala-95–Ile-112. Residues Thr-113–Gly-121 lie on the Extracellular side of the membrane. The chain crosses the membrane as a helical span at residues Asn-122–Ser-141. The Cytoplasmic segment spans residues Leu-142–Pro-152. Residues Pro-153 to Val-169 traverse the membrane as a helical segment. Over Ile-170–Lys-179 the chain is Extracellular. A helical transmembrane segment spans residues Trp-180–Gly-197. The Cytoplasmic segment spans residues Leu-198–Leu-208. The helical transmembrane segment at Lys-209–Met-235 threads the bilayer. The Extracellular segment spans residues Gly-236–Trp-241. A helical membrane pass occupies residues Gly-242–Gly-250. Residues Ala-251–Leu-278 lie on the Cytoplasmic side of the membrane. The Na(+) site is built by Val-252, Gly-283, Asp-286, and Asp-287. Residues Leu-279–Leu-298 traverse the membrane as a helical segment. At Gly-299–Leu-308 the chain is on the extracellular side. Residues Asn-309–Leu-332 form a helical membrane-spanning segment. Residues His-333 to Arg-347 are Cytoplasmic-facing. A helical membrane pass occupies residues Ser-348–Phe-365. Over Gly-366–Gly-369 the chain is Extracellular. The chain crosses the membrane as a helical span at residues Ser-370 to Leu-381. Residues Ala-382–Ala-398 lie on the Cytoplasmic side of the membrane. Residues Val-399–Ala-419 form a helical membrane-spanning segment. The Extracellular portion of the chain corresponds to Ser-420–Thr-425. The chain crosses the membrane as a helical span at residues Val-426–Val-448. Residues Cys-449 to Ala-469 lie on the Cytoplasmic side of the membrane. The chain crosses the membrane as a helical span at residues Thr-470–Asp-481. Topologically, residues Thr-482–Tyr-494 are extracellular. A helical membrane pass occupies residues Gly-495–Ile-517. Topologically, residues Gly-518 to Val-539 are cytoplasmic.

The protein belongs to the monovalent cation:proton antiporter 1 (CPA1) transporter (TC 2.A.36) family. In terms of assembly, homodimer; dimerization is essential for SLC9B2 activity. Lipids seem to play a role in the stabilization of the dimerization subdomain.

Its subcellular location is the cell membrane. The protein localises to the mitochondrion membrane. It localises to the endosome membrane. The protein resides in the recycling endosome membrane. It is found in the cytoplasmic vesicle. Its subcellular location is the secretory vesicle. The protein localises to the synaptic vesicle membrane. It localises to the basolateral cell membrane. The protein resides in the apical cell membrane. It catalyses the reaction Li(+)(out) + H(+)(in) = Li(+)(in) + H(+)(out). The catalysed reaction is Li(+)(in) + Na(+)(out) = Li(+)(out) + Na(+)(in). It carries out the reaction Na(+)(in) + H(+)(out) = Na(+)(out) + H(+)(in). With respect to regulation, allosterically inhibited by the N-terminal domain. Inhibited by phloretin. Its function is as follows. Electroneutral Na(+) Li(+)/H(+) antiporter that extrudes Na(+) or Li(+) in exchange for external protons across the membrane. Uses the proton gradient/membrane potential to extrude sodium. Contributes to the regulation of intracellular pH and sodium homeostasis. Also able to mediate Na(+)/Li(+) antiporter activity in kidney. This is Sodium/hydrogen exchanger 9B2 (slc9b2) from Xenopus tropicalis (Western clawed frog).